The chain runs to 469 residues: MERAMANVDLGPYRRIVQIFWDPEPTNDVVHDQPVWCLGRSYRLNGKKNIKADDHHPQTPPSVLKAETETQEAHDTAQPPNPPTNAPDTPPDSISSSFSSSLAYDDPVVDGGWPSGFISDFESKIWMTYRSEFEPIPRSTNPQATSALSLSMRLKSQLGDQSPFSSDSGWGCMIRSGQSMLANTIAMVRLGRGDWRRGESVEEECRLLKDFADDPRAPYSIHSFVRHGASACGKYPGEWFGPSATARCIQALTNSHESSIRVYSTGDGPDVYEDEFMQIAKPPGEDFHPTLVLVGTRLGIDKITPVYWEALIAALQMPQSESQGKYYQYITRTFSALTIRSGRPSSSHYFIGAQGSFLFYLDPHHTRVALPYHEDPIEYTSEEIASCHTPRLRRIHVREMDPSMLIGFLIQNEVDWQELKRNVKHVQGKSIIHITDRNAVLGGSSEGRESAIDEVETLSDDDTDTIHEA.

Positions 48–99 (KNIKADDHHPQTPPSVLKAETETQEAHDTAQPPNPPTNAPDTPPDSISSSFS) are disordered. A compositionally biased stretch (basic and acidic residues) spans 66–75 (AETETQEAHD). Residues 79-90 (PPNPPTNAPDTP) show a composition bias toward pro residues. Cys172 acts as the Nucleophile in catalysis. Residues Asp362 and His364 contribute to the active site. Residues 443-469 (GSSEGRESAIDEVETLSDDDTDTIHEA) are disordered. Acidic residues predominate over residues 452-463 (IDEVETLSDDDT).

Belongs to the peptidase C54 family. Interacts with ATG8.

It localises to the cytoplasm. Its subcellular location is the nucleus. It is found in the preautophagosomal structure. The enzyme catalyses [protein]-C-terminal L-amino acid-glycyl-phosphatidylethanolamide + H2O = [protein]-C-terminal L-amino acid-glycine + a 1,2-diacyl-sn-glycero-3-phosphoethanolamine. Cysteine protease that plays a key role in cytoplasm to vacuole transport (Cvt) and autophagy by mediating both proteolytic activation and delipidation of ATG8. Required for selective autophagic degradation of the nucleus (nucleophagy) as well as for mitophagy which contributes to regulate mitochondrial quantity and quality by eliminating the mitochondria to a basal level to fulfill cellular energy requirements and preventing excess ROS production. The protease activity is required for proteolytic activation of ATG8: cleaves the C-terminal amino acid of ATG8 to reveal a C-terminal glycine. ATG8 ubiquitin-like activity requires the exposure of the glycine at the C-terminus for its conjugation to phosphatidylethanolamine (PE) and its insertion to membranes, which is necessary for autophagy. The ATG8-PE conjugate mediates tethering between adjacent membranes and stimulates membrane hemifusion, leading to expansion of the autophagosomal membrane during autophagy. In addition to the protease activity, also catalyzes deconjugation of PE-conjugated forms of ATG8 during macroautophagy: ATG8 delipidation is required to release the protein from membranes, which facilitates multiple events during macroautophagy, and especially for efficient autophagosome biogenesis, the assembly of ATG9-containing tubulovesicular clusters into phagophores/autophagosomes, and for the disassembly of PAS-associated ATG components. ATG8 delipidation by ATG4 also recycles ATG8-PE generated on inappropriate membranes to maintain a reservoir of unlipidated ATG8 that is required for autophagosome formation at the PAS. Autophagy is required for proper vegetative growth, asexual/sexual reproduction, and full virulence. Autophagy is particularly involved in the biosynthesis of deoxynivalenol (DON), an important virulence determinant. This Gibberella zeae (strain ATCC MYA-4620 / CBS 123657 / FGSC 9075 / NRRL 31084 / PH-1) (Wheat head blight fungus) protein is Cysteine protease ATG4.